The following is a 142-amino-acid chain: Protein Turandot X (142 aa).

Positions 1 to 22 are cleaved as a signal peptide; it reads MGLSIGSLLICVFLGIVPFATA.

This sequence belongs to the Turandot family.

Its subcellular location is the secreted. Its function is as follows. A humoral factor that may play a role in stress tolerance. This Drosophila melanogaster (Fruit fly) protein is Protein Turandot X.